Here is an 87-residue protein sequence, read N- to C-terminus: UPF0250 protein PC1_1177 (87 aa).

The protein belongs to the UPF0250 family.

The chain is UPF0250 protein PC1_1177 from Pectobacterium carotovorum subsp. carotovorum (strain PC1).